Here is a 234-residue protein sequence, read N- to C-terminus: Mediator of RNA polymerase II transcription subunit 4 (234 aa).

Residues 71–124 (HQEAYRRLVEKKNEVAGLEMRVRGLVKRLEEGRKELEGMIDQGERSLEDIQKSE) adopt a coiled-coil conformation. A disordered region spans residues 188–234 (GVVGEEQKAPQKVEERREHVEHEESGRRYDPNAVFQLDLNSDESDED). A compositionally biased stretch (basic and acidic residues) spans 189–217 (VVGEEQKAPQKVEERREHVEHEESGRRYD).

Belongs to the Mediator complex subunit 4 family. In terms of assembly, component of the Mediator complex.

It localises to the nucleus. Its function is as follows. Component of the Mediator complex, a coactivator involved in the regulated transcription of nearly all RNA polymerase II-dependent genes. Mediator functions as a bridge to convey information from gene-specific regulatory proteins to the basal RNA polymerase II transcription machinery. Mediator is recruited to promoters by direct interactions with regulatory proteins and serves as a scaffold for the assembly of a functional preinitiation complex with RNA polymerase II and the general transcription factors. The chain is Mediator of RNA polymerase II transcription subunit 4 (MED4) from Cryptococcus neoformans var. neoformans serotype D (strain B-3501A) (Filobasidiella neoformans).